The primary structure comprises 110 residues: UPF0213 protein DVU_3309 (110 aa).

One can recognise a GIY-YIG domain in the interval 8 to 83 (EVWFVYLLRC…KRQPTDQKLA (76 aa)).

It belongs to the UPF0213 family.

The polypeptide is UPF0213 protein DVU_3309 (Nitratidesulfovibrio vulgaris (strain ATCC 29579 / DSM 644 / CCUG 34227 / NCIMB 8303 / VKM B-1760 / Hildenborough) (Desulfovibrio vulgaris)).